The primary structure comprises 529 residues: Bifunctional purine biosynthesis protein PurH (529 aa).

Residues 1–148 form the MGS-like domain; it reads MQQRRPVRRA…KNHKDVAIVV (148 aa). Position 287 is an N6-acetyllysine (Lys287).

It belongs to the PurH family.

It catalyses the reaction (6R)-10-formyltetrahydrofolate + 5-amino-1-(5-phospho-beta-D-ribosyl)imidazole-4-carboxamide = 5-formamido-1-(5-phospho-D-ribosyl)imidazole-4-carboxamide + (6S)-5,6,7,8-tetrahydrofolate. The enzyme catalyses IMP + H2O = 5-formamido-1-(5-phospho-D-ribosyl)imidazole-4-carboxamide. Its pathway is purine metabolism; IMP biosynthesis via de novo pathway; 5-formamido-1-(5-phospho-D-ribosyl)imidazole-4-carboxamide from 5-amino-1-(5-phospho-D-ribosyl)imidazole-4-carboxamide (10-formyl THF route): step 1/1. The protein operates within purine metabolism; IMP biosynthesis via de novo pathway; IMP from 5-formamido-1-(5-phospho-D-ribosyl)imidazole-4-carboxamide: step 1/1. The polypeptide is Bifunctional purine biosynthesis protein PurH (Escherichia fergusonii (strain ATCC 35469 / DSM 13698 / CCUG 18766 / IAM 14443 / JCM 21226 / LMG 7866 / NBRC 102419 / NCTC 12128 / CDC 0568-73)).